Consider the following 531-residue polypeptide: UDP-glucuronosyltransferase 1A6 (531 aa).

An N-terminal signal peptide occupies residues 1–26 (MACLLSAAQRASAGVLFVALWGTVLG). Asn-294 carries N-linked (GlcNAc...) asparagine glycosylation. A helical transmembrane segment spans residues 489–505 (VIGFLLAIVLTVAFVTF).

This sequence belongs to the UDP-glycosyltransferase family.

It is found in the microsome. Its subcellular location is the endoplasmic reticulum membrane. The catalysed reaction is glucuronate acceptor + UDP-alpha-D-glucuronate = acceptor beta-D-glucuronoside + UDP + H(+). It carries out the reaction (5Z,8Z,11Z,14Z)-eicosatetraenoate + UDP-alpha-D-glucuronate = O-[(5Z),(8Z),(11Z),(14Z)-eicosatetraenoyl]-beta-D-glucuronate + UDP. It catalyses the reaction 15-hydroxy-(5Z,8Z,11Z,13E)-eicosatetraenoate + UDP-alpha-D-glucuronate = 15-O-(beta-D-glucuronosyl)-(5Z,8Z,11Z,14Z)-eicosatetraenoate + UDP + H(+). The enzyme catalyses (E)-ferulate + UDP-alpha-D-glucuronate = (E)-4-O-(beta-D-glucuronosyl)-ferulate + UDP + H(+). The catalysed reaction is (E)-ferulate + UDP-alpha-D-glucuronate = (E)-ferulic acid beta-D-glucuronate ester + UDP. Functionally, UDP-glucuronosyltransferase (UGT) that catalyzes phase II biotransformation reactions in which lipophilic substrates are conjugated with glucuronic acid to facilitate their inactivation and excretion from the body. Essential for the elimination and detoxification of drugs, xenobiotics and endogenous compounds. Involved in the glucuronidation of arachidonic acid (AA) and AA-derived eicosanoids including 15-HETE and 20-HETE. Conjugates small planar phenolic molecules such as 4-nitrophenol, 1-naphthol, and 4-methylumbelliferone. The bulky phenol 4-hydroxybiphenyl, androgens and estrogens are not substrates. 2-hydroxybiphenyl is an excellent substrate. Involved in the glucuronidation of the phytochemical ferulic acid at the phenolic or the carboxylic acid group. The protein is UDP-glucuronosyltransferase 1A6 (UGT1) of Oryctolagus cuniculus (Rabbit).